Here is a 340-residue protein sequence, read N- to C-terminus: Adenosine receptor A2b (340 aa).

Residues 1 to 6 (MNTMKT) lie on the Extracellular side of the membrane. Residues 7–31 (TYIVLELIIAVLSIAGNVLVCWAVA) form a helical membrane-spanning segment. Topologically, residues 32-41 (INSTLKNATN) are cytoplasmic. Residues 42–65 (YFLVSLAVADIAVGLLAIPFAITI) traverse the membrane as a helical segment. The Extracellular segment spans residues 66–76 (SIGFQVDFHSC). A disulfide bridge links Cys76 with Cys171. A helical membrane pass occupies residues 77-99 (LFFACFVLVLTQSSIFSLLAVAI). Residues 100–119 (DRYLAIKIPLRYNSLVTGKR) lie on the Cytoplasmic side of the membrane. Residues 120-142 (ARGLIAVLWLLSFVIGLTPLMGW) traverse the membrane as a helical segment. Topologically, residues 143 to 178 (NKAMSGCPNSTNETGADHGAGHHGCFISCLFENVVT) are extracellular. 2 N-linked (GlcNAc...) asparagine glycosylation sites follow: Asn151 and Asn154. Adenosine is bound at residue Glu174. Residues 179-203 (MSYMVYFNFFGCVLLPLIIMLGIYI) traverse the membrane as a helical segment. Over 204 to 235 (KIFMVACKQLHQIELMGNSRTTLQKEVHAAKS) the chain is Cytoplasmic. The helical transmembrane segment at 236–259 (LAIIVGLFAFCWLPLHILNCITHF) threads the bilayer. Asn254 provides a ligand contact to adenosine. Topologically, residues 260 to 267 (HEEFSKSK) are extracellular. A helical transmembrane segment spans residues 268–291 (PEWVMYVAIILSHANSVINPIIYA). Positions 279 and 280 each coordinate adenosine. Residues 292–340 (YRIRDFRYTFHKIISKILCKTDDFPKCTTDNNQHLTVTNVNAPAASVTI) lie on the Cytoplasmic side of the membrane. A lipid anchor (S-palmitoyl cysteine) is attached at Cys310.

Belongs to the G-protein coupled receptor 1 family.

It is found in the cell membrane. Receptor for adenosine. The activity of this receptor is mediated by G proteins which activate adenylyl cyclase. The protein is Adenosine receptor A2b (ADORA2B) of Gallus gallus (Chicken).